The chain runs to 701 residues: Peptide transporter 3 (701 aa).

9 helical membrane-spanning segments follow: residues 29 to 49, 55 to 75, 91 to 111, 119 to 139, 154 to 174, 188 to 208, 269 to 289, 318 to 338, and 351 to 371; these read FSFY…HEFS, FIYH…SIMA, IYVV…SYPI, GLFV…AFAA, FSFF…ITPI, FPLA…LFLM, GLLN…LFDQ, INPV…YPAL, and AVGG…QLKV. N-linked (GlcNAc...) asparagine glycosylation is found at N391 and N432. Transmembrane regions (helical) follow at residues 575-595, 611-631, and 641-661; these read ILWS…LSVT, VLTA…MMIS, and LEFF…ILLA.

It belongs to the major facilitator superfamily. Proton-dependent oligopeptide transporter (POT/PTR) (TC 2.A.17) family. In terms of tissue distribution, expressed in the AVA interneuron.

The protein resides in the membrane. In terms of biological role, neuron-specific, H(+)-coupled oligopeptide transporter with broad specificity towards di- and tripeptides in a Na(+) and Cl(-)-independent manner. Shows H(+) channel activity in the absence of peptide substrates. This is Peptide transporter 3 (pept-3) from Caenorhabditis elegans.